A 203-amino-acid polypeptide reads, in one-letter code: 2-phospho-L-lactate guanylyltransferase (203 aa).

Belongs to the CofC family. Homodimer.

It catalyses the reaction (2S)-2-phospholactate + GTP + H(+) = (2S)-lactyl-2-diphospho-5'-guanosine + diphosphate. It functions in the pathway cofactor biosynthesis; coenzyme F420 biosynthesis. Guanylyltransferase that catalyzes the activation of (2S)-2-phospholactate (2-PL) as (2S)-lactyl-2-diphospho-5'-guanosine, via the condensation of 2-PL with GTP. It is involved in the biosynthesis of coenzyme F420, a hydride carrier cofactor. The chain is 2-phospho-L-lactate guanylyltransferase from Halomicrobium mukohataei (strain ATCC 700874 / DSM 12286 / JCM 9738 / NCIMB 13541) (Haloarcula mukohataei).